A 341-amino-acid polypeptide reads, in one-letter code: Phenylalanine--tRNA ligase alpha subunit (341 aa).

Position 254 (Glu-254) interacts with Mg(2+).

This sequence belongs to the class-II aminoacyl-tRNA synthetase family. Phe-tRNA synthetase alpha subunit type 1 subfamily. As to quaternary structure, tetramer of two alpha and two beta subunits. It depends on Mg(2+) as a cofactor.

Its subcellular location is the cytoplasm. The enzyme catalyses tRNA(Phe) + L-phenylalanine + ATP = L-phenylalanyl-tRNA(Phe) + AMP + diphosphate + H(+). This is Phenylalanine--tRNA ligase alpha subunit from Chlorobium phaeovibrioides (strain DSM 265 / 1930) (Prosthecochloris vibrioformis (strain DSM 265)).